A 156-amino-acid chain; its full sequence is Small ribosomal subunit protein uS7 (156 aa).

The protein belongs to the universal ribosomal protein uS7 family. In terms of assembly, part of the 30S ribosomal subunit. Contacts proteins S9 and S11.

One of the primary rRNA binding proteins, it binds directly to 16S rRNA where it nucleates assembly of the head domain of the 30S subunit. Is located at the subunit interface close to the decoding center, probably blocks exit of the E-site tRNA. This chain is Small ribosomal subunit protein uS7, found in Lactobacillus delbrueckii subsp. bulgaricus (strain ATCC 11842 / DSM 20081 / BCRC 10696 / JCM 1002 / NBRC 13953 / NCIMB 11778 / NCTC 12712 / WDCM 00102 / Lb 14).